The primary structure comprises 1572 residues: Dynein axonemal assembly factor 8 (1572 aa).

Disordered regions lie at residues 1-21, 262-304, 324-428, and 849-871; these read MASEQDGFLPAATRGDSNWSG, SEEV…HPQS, SLEQ…EILQ, and FQNPYSRSTQPRSANLRSRSDSE. The span at 324-335 shows a compositional bias: polar residues; sequence SLEQNPENPSQR. Residues 336 to 351 are compositionally biased toward basic and acidic residues; that stretch reads NEQKEKHHLNKTDHTG. Positions 361–374 are enriched in polar residues; that stretch reads NIQNDSLSDANMSN. Basic and acidic residues predominate over residues 409–426; sequence VGREEKDGREEQEKEKEI. Polar residues predominate over residues 849–865; the sequence is FQNPYSRSTQPRSANLR. The segment at 1249–1382 is NDK; it reads TVLLLKPRIW…IRDIKTFFPE (134 aa).

In terms of assembly, interacts with DNAI2. Expression is enriched in multiciliated cells in the epidermis and the nephrostomes of the pronephros.

It localises to the dynein axonemal particle. Its subcellular location is the cytoplasm. In terms of biological role, in cyliated cells, dynein axonemal particle-specific protein required for deployment of ODA to the axoneme. Interacts with outer dynein arm (ODA) subunits. The polypeptide is Dynein axonemal assembly factor 8 (dnaaf8) (Xenopus laevis (African clawed frog)).